Here is a 486-residue protein sequence, read N- to C-terminus: Cardiolipin synthase A (486 aa).

The next 2 helical transmembrane spans lie at Thr-3–Val-23 and Met-38–Phe-58. PLD phosphodiesterase domains lie at Met-219–Arg-246 and Glu-399–Ser-426. Active-site residues include His-224, Lys-226, Asp-231, His-404, Lys-406, and Asp-411.

It belongs to the phospholipase D family. Cardiolipin synthase subfamily. ClsA sub-subfamily.

Its subcellular location is the cell inner membrane. It carries out the reaction 2 a 1,2-diacyl-sn-glycero-3-phospho-(1'-sn-glycerol) = a cardiolipin + glycerol. Its function is as follows. Catalyzes the reversible phosphatidyl group transfer from one phosphatidylglycerol molecule to another to form cardiolipin (CL) (diphosphatidylglycerol) and glycerol. The protein is Cardiolipin synthase A of Yersinia pseudotuberculosis serotype IB (strain PB1/+).